The sequence spans 275 residues: 2,3,4,5-tetrahydropyridine-2,6-dicarboxylate N-succinyltransferase (275 aa).

2 residues coordinate substrate: arginine 104 and aspartate 141.

The protein belongs to the transferase hexapeptide repeat family. As to quaternary structure, homotrimer.

The protein localises to the cytoplasm. The enzyme catalyses (S)-2,3,4,5-tetrahydrodipicolinate + succinyl-CoA + H2O = (S)-2-succinylamino-6-oxoheptanedioate + CoA. It functions in the pathway amino-acid biosynthesis; L-lysine biosynthesis via DAP pathway; LL-2,6-diaminopimelate from (S)-tetrahydrodipicolinate (succinylase route): step 1/3. The sequence is that of 2,3,4,5-tetrahydropyridine-2,6-dicarboxylate N-succinyltransferase from Aeromonas salmonicida (strain A449).